An 85-amino-acid polypeptide reads, in one-letter code: SKP1-like protein 6 (85 aa).

Residues 65-85 form an interaction with the F-box domain of F-box proteins region; sequence MMAANYLNIQSLLDLTFSNCR.

Belongs to the SKP1 family. In terms of assembly, part of a SCF (SKP1-cullin-F-box) protein ligase complex.

Its subcellular location is the nucleus. The protein operates within protein modification; protein ubiquitination. Its function is as follows. Involved in ubiquitination and subsequent proteasomal degradation of target proteins. Together with CUL1, RBX1 and a F-box protein, it forms a SCF E3 ubiquitin ligase complex. The functional specificity of this complex depends on the type of F-box protein. In the SCF complex, it serves as an adapter that links the F-box protein to CUL1. This is SKP1-like protein 6 (ASK6) from Arabidopsis thaliana (Mouse-ear cress).